A 509-amino-acid polypeptide reads, in one-letter code: tRNA-2-methylthio-N(6)-dimethylallyladenosine synthase (509 aa).

The segment covering 1–13 has biased composition (polar residues); that stretch reads MNEQQRLASQQAN. A disordered region spans residues 1–26; it reads MNEQQRLASQQANSSKKKEEKDYSKY. Over residues 16–25 the composition is skewed to basic and acidic residues; that stretch reads KKKEEKDYSK. Positions 66 to 184 constitute an MTTase N-terminal domain; it reads RKFYIRTYGC…LPYILKDAMF (119 aa). Positions 75, 111, 145, 221, 225, and 228 each coordinate [4Fe-4S] cluster. The Radical SAM core domain maps to 207–437; that stretch reads RRGDIKAWVN…NALVNKLAIE (231 aa). The region spanning 440 to 503 is the TRAM domain; the sequence is NRYKGQIVEV…TWSLNGELVE (64 aa).

It belongs to the methylthiotransferase family. MiaB subfamily. Monomer. [4Fe-4S] cluster serves as cofactor.

It is found in the cytoplasm. It carries out the reaction N(6)-dimethylallyladenosine(37) in tRNA + (sulfur carrier)-SH + AH2 + 2 S-adenosyl-L-methionine = 2-methylsulfanyl-N(6)-dimethylallyladenosine(37) in tRNA + (sulfur carrier)-H + 5'-deoxyadenosine + L-methionine + A + S-adenosyl-L-homocysteine + 2 H(+). Its function is as follows. Catalyzes the methylthiolation of N6-(dimethylallyl)adenosine (i(6)A), leading to the formation of 2-methylthio-N6-(dimethylallyl)adenosine (ms(2)i(6)A) at position 37 in tRNAs that read codons beginning with uridine. This chain is tRNA-2-methylthio-N(6)-dimethylallyladenosine synthase, found in Bacillus cereus (strain ATCC 10987 / NRS 248).